The primary structure comprises 308 residues: uncharacterized protein (308 aa).

The disordered stretch occupies residues 158-221 (GDSNAETFEE…DSINHGESSE (64 aa)). Basic and acidic residues predominate over residues 206–221 (RNGDRSDSINHGESSE).

This is an uncharacterized protein from Arabidopsis thaliana (Mouse-ear cress).